A 337-amino-acid polypeptide reads, in one-letter code: Glyceraldehyde-3-phosphate dehydrogenase (337 aa).

Residues 12-13, Asp34, and Arg79 each bind NAD(+); that span reads RI. D-glyceraldehyde 3-phosphate-binding positions include 150–152, Thr181, 210–211, and Arg233; these read SCT and TG. Cys151 serves as the catalytic Nucleophile. Asn315 is an NAD(+) binding site.

The protein belongs to the glyceraldehyde-3-phosphate dehydrogenase family. As to quaternary structure, homotetramer.

The protein localises to the cytoplasm. The enzyme catalyses D-glyceraldehyde 3-phosphate + phosphate + NAD(+) = (2R)-3-phospho-glyceroyl phosphate + NADH + H(+). It functions in the pathway carbohydrate degradation; glycolysis; pyruvate from D-glyceraldehyde 3-phosphate: step 1/5. This is Glyceraldehyde-3-phosphate dehydrogenase (GPD) from Coccidioides immitis (strain RS) (Valley fever fungus).